Consider the following 222-residue polypeptide: Deoxyribose-phosphate aldolase (222 aa).

Residue aspartate 93 is the Proton donor/acceptor of the active site. The active-site Schiff-base intermediate with acetaldehyde is lysine 156. The Proton donor/acceptor role is filled by lysine 186.

Belongs to the DeoC/FbaB aldolase family. DeoC type 1 subfamily.

It localises to the cytoplasm. It catalyses the reaction 2-deoxy-D-ribose 5-phosphate = D-glyceraldehyde 3-phosphate + acetaldehyde. The protein operates within carbohydrate degradation; 2-deoxy-D-ribose 1-phosphate degradation; D-glyceraldehyde 3-phosphate and acetaldehyde from 2-deoxy-alpha-D-ribose 1-phosphate: step 2/2. Catalyzes a reversible aldol reaction between acetaldehyde and D-glyceraldehyde 3-phosphate to generate 2-deoxy-D-ribose 5-phosphate. This is Deoxyribose-phosphate aldolase from Nocardia farcinica (strain IFM 10152).